The chain runs to 657 residues: Probable cytochrome P450 556A1 (657 aa).

Residues 2–24 (FLTSILYTIIIILIFYKGLEYLI) traverse the membrane as a helical segment. The tract at residues 440–486 (RSLPSINNNNNNNNNNNNNNNNNNNNNNNNNSNNNSINGNNKNNNRN) is disordered. A compositionally biased stretch (low complexity) spans 446–486 (NNNNNNNNNNNNNNNNNNNNNNNNNSNNNSINGNNKNNNRN). Position 587 (cysteine 587) interacts with heme.

It belongs to the cytochrome P450 family. Requires heme as cofactor.

The protein localises to the membrane. The polypeptide is Probable cytochrome P450 556A1 (cyp556A1) (Dictyostelium discoideum (Social amoeba)).